A 274-amino-acid polypeptide reads, in one-letter code: NADPH-dependent 7-cyano-7-deazaguanine reductase (274 aa).

A substrate-binding site is contributed by 80–82 (VES). 82–83 (SK) contacts NADPH. C181 (thioimide intermediate) is an active-site residue. The Proton donor role is filled by D188. 220-221 (HE) provides a ligand contact to substrate. An NADPH-binding site is contributed by 249-250 (RG).

Belongs to the GTP cyclohydrolase I family. QueF type 2 subfamily. Homodimer.

The protein resides in the cytoplasm. It carries out the reaction 7-aminomethyl-7-carbaguanine + 2 NADP(+) = 7-cyano-7-deazaguanine + 2 NADPH + 3 H(+). The protein operates within tRNA modification; tRNA-queuosine biosynthesis. Functionally, catalyzes the NADPH-dependent reduction of 7-cyano-7-deazaguanine (preQ0) to 7-aminomethyl-7-deazaguanine (preQ1). The chain is NADPH-dependent 7-cyano-7-deazaguanine reductase from Burkholderia mallei (strain NCTC 10247).